The following is a 310-amino-acid chain: Methionyl-tRNA formyltransferase (310 aa).

110-113 serves as a coordination point for (6S)-5,6,7,8-tetrahydrofolate; sequence SVLP.

The protein belongs to the Fmt family.

The catalysed reaction is L-methionyl-tRNA(fMet) + (6R)-10-formyltetrahydrofolate = N-formyl-L-methionyl-tRNA(fMet) + (6S)-5,6,7,8-tetrahydrofolate + H(+). Attaches a formyl group to the free amino group of methionyl-tRNA(fMet). The formyl group appears to play a dual role in the initiator identity of N-formylmethionyl-tRNA by promoting its recognition by IF2 and preventing the misappropriation of this tRNA by the elongation apparatus. This chain is Methionyl-tRNA formyltransferase, found in Mycolicibacterium vanbaalenii (strain DSM 7251 / JCM 13017 / BCRC 16820 / KCTC 9966 / NRRL B-24157 / PYR-1) (Mycobacterium vanbaalenii).